The primary structure comprises 957 residues: Glycine dehydrogenase (decarboxylating) (957 aa).

At Lys702 the chain carries N6-(pyridoxal phosphate)lysine.

It belongs to the GcvP family. The glycine cleavage system is composed of four proteins: P, T, L and H. The cofactor is pyridoxal 5'-phosphate.

It catalyses the reaction N(6)-[(R)-lipoyl]-L-lysyl-[glycine-cleavage complex H protein] + glycine + H(+) = N(6)-[(R)-S(8)-aminomethyldihydrolipoyl]-L-lysyl-[glycine-cleavage complex H protein] + CO2. Its function is as follows. The glycine cleavage system catalyzes the degradation of glycine. The P protein binds the alpha-amino group of glycine through its pyridoxal phosphate cofactor; CO(2) is released and the remaining methylamine moiety is then transferred to the lipoamide cofactor of the H protein. The sequence is that of Glycine dehydrogenase (decarboxylating) from Bradyrhizobium sp. (strain ORS 278).